The following is a 373-amino-acid chain: Peptide chain release factor subunit 1 (373 aa).

Belongs to the eukaryotic release factor 1 family. In terms of assembly, heterodimer of two subunits, one of which binds GTP.

The protein resides in the cytoplasm. Directs the termination of nascent peptide synthesis (translation) in response to the termination codons UAA, UAG and UGA. In Aeropyrum pernix (strain ATCC 700893 / DSM 11879 / JCM 9820 / NBRC 100138 / K1), this protein is Peptide chain release factor subunit 1 (prf1).